The following is a 185-amino-acid chain: Photosystem I assembly protein Ycf4 (185 aa).

2 helical membrane passes run 21–43 and 68–90; these read NFFW…ISSY and FYGI…NVGS.

Belongs to the Ycf4 family.

The protein localises to the plastid. The protein resides in the chloroplast thylakoid membrane. Its function is as follows. Seems to be required for the assembly of the photosystem I complex. This is Photosystem I assembly protein Ycf4 from Aegilops tauschii (Tausch's goatgrass).